Consider the following 551-residue polypeptide: MVASWLLSTLTFALVLLIKETSTWTYHFSAENMTYDEASAYCQQNYTHLVAIQNKEEIDYLNSILDYSPSYYWIGIRKVNNVWIWVGTHKPLTEGAKNWAPGEPNNKQNNEDCVEIYIKRPKDTGMWNDERCSKKKLALCYTAACTEASCSGHGECIETINNYSCKCYPGFSGLKCEQVVTCEAQVQPQHGSLNCTHPLGNFSYNSSCSVSCERGYLPSSTETTWCTSSGEWSAPPATCKVVECDTMGKPANGDVKCSPSQGSAPWNTTCTFDCEEGFTLLGARSLQCTSSGSWDNEKPTCKAVSCDTIHHPQNGSVSCSNSSEGKFTFRSSCNFTCEENFLLRGPAQVECTAQGQWTQQAPVCEAVKCDPVHTLEDGFVKCTHPHTGEFTYKSSCTFNCREGFELHGSAQLECTSQGQWAQELPSCQVVQCPSLAVLGKTNVSCSGEPVFGTVCNFACPEGWTLNGSAALMCGAEGQWSGMLPTCEEPIASNVPLAVGLSVSGTSFLTLTSFLLWFLKYFRKKAKKFVPASSRYVGLEAHGNCQVPSHLI.

The first 23 residues, 1 to 23 (MVASWLLSTLTFALVLLIKETST), serve as a signal peptide directing secretion. One can recognise a C-type lectin domain in the interval 24 to 141 (WTYHFSAENM…CSKKKLALCY (118 aa)). Residues 24-495 (WTYHFSAENM…CEEPIASNVP (472 aa)) lie on the Extracellular side of the membrane. N32 and N45 each carry an N-linked (GlcNAc...) asparagine glycan. Cystine bridges form between C42-C140, C113-C132, C145-C156, C150-C165, C167-C176, C182-C226, C195-C208, C212-C239, C244-C288, C257-C270, C274-C301, C306-C351, C337-C364, C369-C414, C400-C427, C432-C473, and C459-C486. E103, N105, and E111 together coordinate Ca(2+). A carbohydrate is bound by residues 103 to 111 (EPNNKQNNE), 115 to 120 (EIYIKR), and 128 to 130 (NDE). Residues N128 and D129 each coordinate Ca(2+). An EGF-like domain is found at 142-177 (TAACTEASCSGHGECIETINNYSCKCYPGFSGLKCE). Residue N162 is glycosylated (N-linked (GlcNAc...) asparagine). Sushi domains follow at residues 180-241 (VTCE…TCKV), 242-303 (VECD…TCKA), 305-366 (SCDT…VCEA), 368-429 (KCDP…SCQV), and 430-488 (VQCP…TCEE). N-linked (GlcNAc...) asparagine glycosylation is found at N194, N201, and N205. A glycan (N-linked (GlcNAc...) asparagine) is linked at N267. Residues N314, N321, and N334 are each glycosylated (N-linked (GlcNAc...) asparagine). 2 N-linked (GlcNAc...) asparagine glycosylation sites follow: N442 and N466. A helical membrane pass occupies residues 496 to 517 (LAVGLSVSGTSFLTLTSFLLWF). Over 518–551 (LKYFRKKAKKFVPASSRYVGLEAHGNCQVPSHLI) the chain is Cytoplasmic.

Belongs to the selectin/LECAM family. Interacts with SELPLG/PSGL1 and PODXL2 through the sialyl Lewis X epitope. SELPLG sulfation appears not to be required for this interaction.

The protein localises to the cell membrane. Cell-surface glycoprotein having a role in immunoadhesion. Mediates in the adhesion of blood neutrophils in cytokine-activated endothelium through interaction with SELPLG/PSGL1. May have a role in capillary morphogenesis. The polypeptide is E-selectin (SELE) (Oryctolagus cuniculus (Rabbit)).